Here is a 322-residue protein sequence, read N- to C-terminus: Acetyl-coenzyme A carboxylase carboxyl transferase subunit alpha (322 aa).

Positions 43-297 (ALKSKSNALT…KEVLTQQLNK (255 aa)) constitute a CoA carboxyltransferase C-terminal domain.

Belongs to the AccA family. As to quaternary structure, acetyl-CoA carboxylase is a heterohexamer composed of biotin carboxyl carrier protein (AccB), biotin carboxylase (AccC) and two subunits each of ACCase subunit alpha (AccA) and ACCase subunit beta (AccD).

It localises to the cytoplasm. The catalysed reaction is N(6)-carboxybiotinyl-L-lysyl-[protein] + acetyl-CoA = N(6)-biotinyl-L-lysyl-[protein] + malonyl-CoA. It functions in the pathway lipid metabolism; malonyl-CoA biosynthesis; malonyl-CoA from acetyl-CoA: step 1/1. In terms of biological role, component of the acetyl coenzyme A carboxylase (ACC) complex. First, biotin carboxylase catalyzes the carboxylation of biotin on its carrier protein (BCCP) and then the CO(2) group is transferred by the carboxyltransferase to acetyl-CoA to form malonyl-CoA. This chain is Acetyl-coenzyme A carboxylase carboxyl transferase subunit alpha, found in Vesicomyosocius okutanii subsp. Calyptogena okutanii (strain HA).